An 80-amino-acid polypeptide reads, in one-letter code: Metallothionein-like protein type 2 (80 aa).

This sequence belongs to the metallothionein superfamily. Type 15 family.

Functionally, metallothioneins have a high content of cysteine residues that bind various heavy metals. This Ricinus communis (Castor bean) protein is Metallothionein-like protein type 2 (MTI).